Here is a 67-residue protein sequence, read N- to C-terminus: Large ribosomal subunit protein bL31 (67 aa).

The protein belongs to the bacterial ribosomal protein bL31 family. Type A subfamily. In terms of assembly, part of the 50S ribosomal subunit.

Binds the 23S rRNA. In Helicobacter acinonychis (strain Sheeba), this protein is Large ribosomal subunit protein bL31.